Consider the following 463-residue polypeptide: tRNA modification GTPase MnmE (463 aa).

Positions 27, 92, and 131 each coordinate (6S)-5-formyl-5,6,7,8-tetrahydrofolate. The TrmE-type G domain occupies 234-386 (GIKLAIVGKP…LEDHLLKIYS (153 aa)). Asn-244 serves as a coordination point for K(+). GTP-binding positions include 244-249 (NVGKSS), 263-269 (TNVAGTT), and 288-291 (DTAG). A Mg(2+)-binding site is contributed by Ser-248. Positions 263, 265, and 268 each coordinate K(+). Mg(2+) is bound at residue Thr-269. Lys-463 is a (6S)-5-formyl-5,6,7,8-tetrahydrofolate binding site.

Belongs to the TRAFAC class TrmE-Era-EngA-EngB-Septin-like GTPase superfamily. TrmE GTPase family. As to quaternary structure, homodimer. Heterotetramer of two MnmE and two MnmG subunits. Requires K(+) as cofactor.

The protein localises to the cytoplasm. In terms of biological role, exhibits a very high intrinsic GTPase hydrolysis rate. Involved in the addition of a carboxymethylaminomethyl (cmnm) group at the wobble position (U34) of certain tRNAs, forming tRNA-cmnm(5)s(2)U34. In Mycoplasmopsis synoviae (strain 53) (Mycoplasma synoviae), this protein is tRNA modification GTPase MnmE.